Reading from the N-terminus, the 61-residue chain is Large ribosomal subunit protein uL30 (61 aa).

The protein belongs to the universal ribosomal protein uL30 family. In terms of assembly, part of the 50S ribosomal subunit.

This chain is Large ribosomal subunit protein uL30, found in Corynebacterium urealyticum (strain ATCC 43042 / DSM 7109).